A 266-amino-acid polypeptide reads, in one-letter code: Glutamate racemase (266 aa).

Residues 9 to 10 (DS) and 41 to 42 (YG) each bind substrate. The Proton donor/acceptor role is filled by Cys-72. Residue 73–74 (NT) coordinates substrate. The active-site Proton donor/acceptor is Cys-184. Position 185-186 (185-186 (TH)) interacts with substrate.

This sequence belongs to the aspartate/glutamate racemases family.

It catalyses the reaction L-glutamate = D-glutamate. The protein operates within cell wall biogenesis; peptidoglycan biosynthesis. Functionally, provides the (R)-glutamate required for cell wall biosynthesis. The protein is Glutamate racemase of Staphylococcus haemolyticus.